We begin with the raw amino-acid sequence, 127 residues long: Small ribosomal subunit protein uS13 (127 aa).

A disordered region spans residues 97–127; sequence PVRGQRTRTNARTRRGRRVTVAGKKKAPSKK. The segment covering 101 to 127 has biased composition (basic residues); that stretch reads QRTRTNARTRRGRRVTVAGKKKAPSKK.

Belongs to the universal ribosomal protein uS13 family. As to quaternary structure, part of the 30S ribosomal subunit. Forms a loose heterodimer with protein S19. Forms two bridges to the 50S subunit in the 70S ribosome.

Functionally, located at the top of the head of the 30S subunit, it contacts several helices of the 16S rRNA. In the 70S ribosome it contacts the 23S rRNA (bridge B1a) and protein L5 of the 50S subunit (bridge B1b), connecting the 2 subunits; these bridges are implicated in subunit movement. Contacts the tRNAs in the A and P-sites. In Microcystis aeruginosa (strain NIES-843 / IAM M-2473), this protein is Small ribosomal subunit protein uS13.